The following is a 474-amino-acid chain: tRNA-2-methylthio-N(6)-dimethylallyladenosine synthase (474 aa).

In terms of domain architecture, MTTase N-terminal spans 3-120 (KKLHIKTWGC…LPDMIEQVRR (118 aa)). [4Fe-4S] cluster contacts are provided by cysteine 12, cysteine 49, cysteine 83, cysteine 157, cysteine 161, and cysteine 164. The Radical SAM core domain occupies 143–375 (RAEGPTAFVS…QDRITQQAMR (233 aa)). Residues 378 to 441 (RHMMGTVQRI…TNSLRGKFIR (64 aa)) form the TRAM domain.

Belongs to the methylthiotransferase family. MiaB subfamily. In terms of assembly, monomer. [4Fe-4S] cluster is required as a cofactor.

It localises to the cytoplasm. The catalysed reaction is N(6)-dimethylallyladenosine(37) in tRNA + (sulfur carrier)-SH + AH2 + 2 S-adenosyl-L-methionine = 2-methylsulfanyl-N(6)-dimethylallyladenosine(37) in tRNA + (sulfur carrier)-H + 5'-deoxyadenosine + L-methionine + A + S-adenosyl-L-homocysteine + 2 H(+). In terms of biological role, catalyzes the methylthiolation of N6-(dimethylallyl)adenosine (i(6)A), leading to the formation of 2-methylthio-N6-(dimethylallyl)adenosine (ms(2)i(6)A) at position 37 in tRNAs that read codons beginning with uridine. This chain is tRNA-2-methylthio-N(6)-dimethylallyladenosine synthase, found in Shewanella sp. (strain MR-4).